Here is a 207-residue protein sequence, read N- to C-terminus: MNLRNKLKLYVITDRRLKPEVESVREALEGGATAIQMRIKNAPTREMYEIGKTLRQLTREYDALFFVDDRVDVALAVDADGVQLGPEDMPIEVAKEIAPNLIIGASVYSLEEALEAEKKGADYLGAGSVFPTKTKEDARVIGLEGLRKIVESVKIPVVAIGGINKDNAREVLKTGVDGIAVISAVMGAEDVRKATEELRKIVEEVLG.

Residues 36–40 (QMRIK) and Asp-68 each bind 4-amino-2-methyl-5-(diphosphooxymethyl)pyrimidine. Mg(2+)-binding residues include Asp-69 and Asp-88. Ser-106 provides a ligand contact to 4-amino-2-methyl-5-(diphosphooxymethyl)pyrimidine. 132–134 (TKT) contributes to the 2-[(2R,5Z)-2-carboxy-4-methylthiazol-5(2H)-ylidene]ethyl phosphate binding site. Lys-135 is a 4-amino-2-methyl-5-(diphosphooxymethyl)pyrimidine binding site. 2-[(2R,5Z)-2-carboxy-4-methylthiazol-5(2H)-ylidene]ethyl phosphate-binding positions include Gly-162 and 182–183 (IS).

It belongs to the thiamine-phosphate synthase family. The cofactor is Mg(2+).

The catalysed reaction is 2-[(2R,5Z)-2-carboxy-4-methylthiazol-5(2H)-ylidene]ethyl phosphate + 4-amino-2-methyl-5-(diphosphooxymethyl)pyrimidine + 2 H(+) = thiamine phosphate + CO2 + diphosphate. It carries out the reaction 2-(2-carboxy-4-methylthiazol-5-yl)ethyl phosphate + 4-amino-2-methyl-5-(diphosphooxymethyl)pyrimidine + 2 H(+) = thiamine phosphate + CO2 + diphosphate. It catalyses the reaction 4-methyl-5-(2-phosphooxyethyl)-thiazole + 4-amino-2-methyl-5-(diphosphooxymethyl)pyrimidine + H(+) = thiamine phosphate + diphosphate. Its pathway is cofactor biosynthesis; thiamine diphosphate biosynthesis; thiamine phosphate from 4-amino-2-methyl-5-diphosphomethylpyrimidine and 4-methyl-5-(2-phosphoethyl)-thiazole: step 1/1. In terms of biological role, condenses 4-methyl-5-(beta-hydroxyethyl)thiazole monophosphate (THZ-P) and 2-methyl-4-amino-5-hydroxymethyl pyrimidine pyrophosphate (HMP-PP) to form thiamine monophosphate (TMP). The polypeptide is Thiamine-phosphate synthase (Pyrococcus furiosus (strain ATCC 43587 / DSM 3638 / JCM 8422 / Vc1)).